Consider the following 369-residue polypeptide: Probable dual-specificity RNA methyltransferase RlmN (369 aa).

Glu-106 acts as the Proton acceptor in catalysis. A Radical SAM core domain is found at 118–354 (EARRLTVCVS…VTVRRSRGQD (237 aa)). A disulfide bridge connects residues Cys-125 and Cys-359. [4Fe-4S] cluster is bound by residues Cys-132, Cys-136, and Cys-139. S-adenosyl-L-methionine-binding positions include 183 to 184 (GE), Ser-215, 238 to 240 (SLH), and Asn-316. The active-site S-methylcysteine intermediate is Cys-359.

It belongs to the radical SAM superfamily. RlmN family. It depends on [4Fe-4S] cluster as a cofactor.

The protein localises to the cytoplasm. The catalysed reaction is adenosine(2503) in 23S rRNA + 2 reduced [2Fe-2S]-[ferredoxin] + 2 S-adenosyl-L-methionine = 2-methyladenosine(2503) in 23S rRNA + 5'-deoxyadenosine + L-methionine + 2 oxidized [2Fe-2S]-[ferredoxin] + S-adenosyl-L-homocysteine. The enzyme catalyses adenosine(37) in tRNA + 2 reduced [2Fe-2S]-[ferredoxin] + 2 S-adenosyl-L-methionine = 2-methyladenosine(37) in tRNA + 5'-deoxyadenosine + L-methionine + 2 oxidized [2Fe-2S]-[ferredoxin] + S-adenosyl-L-homocysteine. Its function is as follows. Specifically methylates position 2 of adenine 2503 in 23S rRNA and position 2 of adenine 37 in tRNAs. The protein is Probable dual-specificity RNA methyltransferase RlmN of Salinibacter ruber (strain DSM 13855 / M31).